The following is a 303-amino-acid chain: RELT-like protein 2 (303 aa).

A helical membrane pass occupies residues 15–35 (LYMLFLLVLVFFLMGLVGFMI). 2 disordered regions span residues 46-67 (CRTS…DDDM) and 111-303 (SSLQ…AGGV). Ser-52 carries the phosphoserine modification. Basic and acidic residues-rich tracts occupy residues 148–158 (RSKEGKSRPRP) and 172–188 (THIE…DGSP). The span at 194 to 212 (GSGGGQDPGGGQGPGGGQP) shows a compositional bias: gly residues.

The protein belongs to the RELT family. As to quaternary structure, interacts with RELT, RELL1, OXSR1, PLSCR1 and TRAF2.

The protein resides in the cell membrane. Induces activation of MAPK14/p38 cascade, when overexpressed. Induces apoptosis, when overexpressed. This Bos taurus (Bovine) protein is RELT-like protein 2 (RELL2).